Reading from the N-terminus, the 468-residue chain is Methylenetetrahydrofolate--tRNA-(uracil-5-)-methyltransferase TrmFO (468 aa).

10–15 (GGGLAG) is an FAD binding site.

The protein belongs to the MnmG family. TrmFO subfamily. Requires FAD as cofactor.

It is found in the cytoplasm. It carries out the reaction uridine(54) in tRNA + (6R)-5,10-methylene-5,6,7,8-tetrahydrofolate + NADH + H(+) = 5-methyluridine(54) in tRNA + (6S)-5,6,7,8-tetrahydrofolate + NAD(+). The catalysed reaction is uridine(54) in tRNA + (6R)-5,10-methylene-5,6,7,8-tetrahydrofolate + NADPH + H(+) = 5-methyluridine(54) in tRNA + (6S)-5,6,7,8-tetrahydrofolate + NADP(+). Functionally, catalyzes the folate-dependent formation of 5-methyl-uridine at position 54 (M-5-U54) in all tRNAs. The polypeptide is Methylenetetrahydrofolate--tRNA-(uracil-5-)-methyltransferase TrmFO (Chelativorans sp. (strain BNC1)).